The primary structure comprises 726 residues: Cyclic nucleotide-gated ion channel 2 (726 aa).

Topologically, residues 1 to 127 (MPSHPNFIFR…SKRVQRWNRA (127 aa)) are cytoplasmic. The disordered stretch occupies residues 26-46 (IDENSNLQINGGDSSSSGSDE). Residues 36–45 (GGDSSSSGSD) show a composition bias toward low complexity. A helical transmembrane segment spans residues 128–148 (LLLARGMALAVDPLFFYALSI). Residues 149–162 (GRTTGPACLYMDGA) lie on the Extracellular side of the membrane. A helical membrane pass occupies residues 163 to 183 (FAAVVTVLRTCLDAVHLWHVW). Over 184–219 (LQFRLAYVSRESLVVGCGKLVWDPRAIASHYARSLT) the chain is Cytoplasmic. A helical transmembrane segment spans residues 220-240 (GFWFDVIVILPVPQAVFWLVV). Topologically, residues 241–254 (PKLIREEKVKLIMT) are extracellular. Residues 255 to 275 (ILLLIFLFQFLPKIYHCICLM) form a helical membrane-spanning segment. Residues 276 to 282 (RRMQKVT) lie on the Cytoplasmic side of the membrane. The chain crosses the membrane as a helical span at residues 283–303 (GYIFGTIWWGFALNLIAYFIA). Topologically, residues 304-424 (SHVAGGCWYV…ANDLEPTSNW (121 aa)) are extracellular. A helical transmembrane segment spans residues 425-445 (LEVIFSIVMVLSGLLLFTLLI). Residues 446-726 (GNIQVFLHAV…MSIRPHDHLE (281 aa)) lie on the Cytoplasmic side of the membrane. A nucleoside 3',5'-cyclic phosphate contacts are provided by residues 531–661 (LFRG…ARYY) and aspartate 600. The segment at 645-661 (FRYKFANERLKRTARYY) is calmodulin-binding. One can recognise an IQ domain in the interval 666 to 695 (RTWAAVNIQMAWRRRRKRTRGENIGGSMSP).

It belongs to the cyclic nucleotide-gated cation channel (TC 1.A.1.5) family. Homotetramer or heterotetramer (Potential). Binds calmodulin-1/4 with a higher affinity than calmodulin-2/3/5. In terms of tissue distribution, expressed in the whole plant but only weakly in roots. Strongly expressed in the expanded cotyledons of 14-day-old seedlings and detected later in leaves after the transition to flowering. Also detected in flowers during organ senescence and in the dehiscence zone of siliques.

Its subcellular location is the cell membrane. Functionally, acts as a cyclic nucleotide-gated ion channel. Permeable to potassium and calcium in a cyclic nucleotide-dependent fashion (cAMP or cGMP). Could also transport lithium, cesium and rubium and displays a strong selectivity against sodium. Seems to directly participate in pathogen-induced calcium influx. May function in homeostasis, re-establishing ionic balance after defense action and/or other stimuli. Could mediate the initiation of the developmentally regulated cell death programs. This Arabidopsis thaliana (Mouse-ear cress) protein is Cyclic nucleotide-gated ion channel 2 (CNGC2).